Consider the following 374-residue polypeptide: SH2 domain-containing protein 2A (374 aa).

The 92-residue stretch at 116–207 folds into the SH2 domain; it reads WFHGFITRRE…PYGEILTQPL (92 aa). A disordered region spans residues 213 to 232; that stretch reads EPAGLSLRADSDSGSKRQDP. Residues 221 to 232 show a composition bias toward basic and acidic residues; that stretch reads ADSDSGSKRQDP. The residue at position 237 (Ser237) is a Phosphoserine. The segment at 241–301 is disordered; that stretch reads QQGQAQASGH…QAPPINPIYQ (61 aa). Residues 256–266 show a composition bias toward polar residues; it reads ASQQKATSQAS. Positions 267–273 match the SH3-binding motif; the sequence is RPRPPIP. The span at 268-279 shows a compositional bias: pro residues; it reads PRPPIPAKPQLP. Ser316 is modified (phosphoserine). Disordered regions lie at residues 321–340 and 353–374; these read PSNI…IGHP and GQVR…GSPS.

As to quaternary structure, interacts with KDR. Interacts with p56-LCK, TXK and ITK. Post-translationally, phosphorylated on tyrosine residues upon TCR-stimulation. In terms of tissue distribution, expression limited to tissues of the immune system and, in particular, activated T-cells and natural killer cells. Expressed in the thymus, lymph node, and to a lesser extent, in the spleen and bone marrow. According to PubMed:10553045, also expressed in the lung.

The protein localises to the cytoplasm. It is found in the cell membrane. Functionally, could be a T-cell-specific adapter protein involved in the control of T-cell activation. May play a role in p56-LCK-mediated T-cell signaling. Could be involved in the regulation of responses to T-cell activation stimuli, specifically proliferation and lymphokine production. Interactions with ITK and TXK may provide important biochemical links of these two important kinases with other components in the T-cell activation machinery. In Mus musculus (Mouse), this protein is SH2 domain-containing protein 2A (Sh2d2a).